Here is a 454-residue protein sequence, read N- to C-terminus: MPQAIVALVGKPNVGKSTLFNRLSLREKSIVHDLPGITRDRKYAKANLFSDLIVVDTPGLEFAAAGSLEFNMMQQSLVAINEAHIICFVVDAITGILPIDEECANLIRKHNKQSSTILVINKTEKPIILDKSYYKLGFSESVCISAKHGQGIYELGDIIQNILSEDKKINFLTTTNTKCEYNQQRPELELAIVGRPNCGKSTFINAILNEDRVLTGPQSGLTRNSVEIDWEYYGHLIRLVDTAGVRKKNAVTQSCELLSVNDTFKTIRFANIVVVMIDATRGLEQQDLSIISYAVNEGRGIVLVVNKWDLIKKKKEFQKELSRLIAYSVFQIKGINPIYISAKEKFNLESVLQQCVLTYASWQKRVTTGTLNQWLAKAMSNSPLPFQSHGKRVKIKYCTQTKARPPTIKLFCNNIESIDESYKRYLINNFKLNFDIAAGVPVRLSFVKGKNPYR.

2 EngA-type G domains span residues 4–167 and 188–363; these read AIVA…SEDK and LELA…ASWQ. GTP contacts are provided by residues 10–17, 56–60, 121–124, 194–201, 241–245, and 306–309; these read GKPNVGKS, DTPGL, NKTE, GRPNCGKS, DTAGV, and NKWD. Residues 364–450 enclose the KH-like domain; the sequence is KRVTTGTLNQ…PVRLSFVKGK (87 aa).

This sequence belongs to the TRAFAC class TrmE-Era-EngA-EngB-Septin-like GTPase superfamily. EngA (Der) GTPase family. In terms of assembly, associates with the 50S ribosomal subunit.

GTPase that plays an essential role in the late steps of ribosome biogenesis. The sequence is that of GTPase Der from Orientia tsutsugamushi (strain Ikeda) (Rickettsia tsutsugamushi).